Consider the following 254-residue polypeptide: Phosphoribosylaminoimidazole-succinocarboxamide synthase (254 aa).

This sequence belongs to the SAICAR synthetase family.

It catalyses the reaction 5-amino-1-(5-phospho-D-ribosyl)imidazole-4-carboxylate + L-aspartate + ATP = (2S)-2-[5-amino-1-(5-phospho-beta-D-ribosyl)imidazole-4-carboxamido]succinate + ADP + phosphate + 2 H(+). Its pathway is purine metabolism; IMP biosynthesis via de novo pathway; 5-amino-1-(5-phospho-D-ribosyl)imidazole-4-carboxamide from 5-amino-1-(5-phospho-D-ribosyl)imidazole-4-carboxylate: step 1/2. The sequence is that of Phosphoribosylaminoimidazole-succinocarboxamide synthase from Acidiphilium cryptum (strain JF-5).